The sequence spans 85 residues: CRISPR-associated endoribonuclease Cas2 (85 aa).

D8 is a binding site for Mg(2+).

It belongs to the CRISPR-associated endoribonuclease Cas2 protein family. In terms of assembly, homodimer, forms a heterotetramer with a Cas1 homodimer. Mg(2+) is required as a cofactor.

CRISPR (clustered regularly interspaced short palindromic repeat), is an adaptive immune system that provides protection against mobile genetic elements (viruses, transposable elements and conjugative plasmids). CRISPR clusters contain sequences complementary to antecedent mobile elements and target invading nucleic acids. CRISPR clusters are transcribed and processed into CRISPR RNA (crRNA). Functions as a ssRNA-specific endoribonuclease. Involved in the integration of spacer DNA into the CRISPR cassette. The protein is CRISPR-associated endoribonuclease Cas2 of Thermococcus kodakarensis (strain ATCC BAA-918 / JCM 12380 / KOD1) (Pyrococcus kodakaraensis (strain KOD1)).